The sequence spans 384 residues: V-type proton ATPase subunit C 2 (384 aa).

This sequence belongs to the V-ATPase C subunit family. As to quaternary structure, V-ATPase is a heteromultimeric enzyme made up of two complexes: the ATP-hydrolytic V1 complex and the proton translocation V0 complex. The V1 complex consists of three catalytic AB heterodimers that form a heterohexamer, three peripheral stalks each consisting of EG heterodimers, one central rotor including subunits D and F, and the regulatory subunits C and H. The proton translocation complex V0 consists of the proton transport subunit a, a ring of proteolipid subunits c9c'', rotary subunit d, subunits e and f, and the accessory subunits vah-19/Ac45 and vah-20/PRR.

In terms of biological role, subunit of the V1 complex of vacuolar(H+)-ATPase (V-ATPase), a multisubunit enzyme composed of a peripheral complex (V1) that hydrolyzes ATP and a membrane integral complex (V0) that translocates protons. V-ATPase is responsible for acidifying and maintaining the pH of intracellular compartments and in some cell types, is targeted to the plasma membrane, where it is responsible for acidifying the extracellular environment. Subunit C is necessary for the assembly of the catalytic sector of the enzyme and is likely to have a specific function in its catalytic activity. The chain is V-type proton ATPase subunit C 2 (VATC) from Ascidia sydneiensis samea (Vanadium-rich ascidian).